Here is a 304-residue protein sequence, read N- to C-terminus: MAATLPLSPINHQLCRFGNNSLTTHRFCSPGFLISSPCFIGLTGMGSATQLRARRSLISSAVATNSLLHDVGATVAVLGGAYALVLSFESLTKRNVIQQSLSRKLVHILSGLLFVLAWPIFSGSTEARYFAAFVPLVNGLRLVINGLSISPNSMLIKSVTREGRAEELLKGPLFYVLALLFSAVFFWRESPIGMISLAMMCGGDGIADIMGRKFGSTKIPYNPRKSWAGSISMFIFGFFISIALLYYYSSLGYLHMNWETTLQRVAMVSMVATVVESLPITDQLDDNISVPLATILAAYLSFGY.

A chloroplast-targeting transit peptide spans 1 to 59; it reads MAATLPLSPINHQLCRFGNNSLTTHRFCSPGFLISSPCFIGLTGMGSATQLRARRSLIS. Transmembrane regions (helical) follow at residues 71 to 91, 105 to 125, 129 to 149, 167 to 187, 191 to 211, and 227 to 247; these read VGAT…FESL, LVHI…SGST, YFAA…GLSI, ELLK…VFFW, PIGM…DIMG, and WAGS…LLYY.

Belongs to the polyprenol kinase family.

It localises to the plastid. The protein localises to the chloroplast membrane. It carries out the reaction phytol + CTP = phytyl phosphate + CDP + H(+). It participates in cofactor biosynthesis; tocopherol biosynthesis. Its function is as follows. Kinase involved in the activation and reutilization of phytol from chlorophyll degradation in plant metabolism, including tocopherol biosynthesis. Catalyzes the conversion of phytol to phytol monophosphate (PMP) in the presence of CTP or UTP. No activity with ATP or GTP as phosphoryl donor. This Arabidopsis thaliana (Mouse-ear cress) protein is Phytol kinase 1, chloroplastic.